The sequence spans 289 residues: 4-hydroxy-tetrahydrodipicolinate synthase (289 aa).

Position 44 (T44) interacts with pyruvate. Y130 functions as the Proton donor/acceptor in the catalytic mechanism. The active-site Schiff-base intermediate with substrate is the K158. I200 serves as a coordination point for pyruvate.

Belongs to the DapA family. In terms of assembly, homotetramer; dimer of dimers.

The protein resides in the cytoplasm. The enzyme catalyses L-aspartate 4-semialdehyde + pyruvate = (2S,4S)-4-hydroxy-2,3,4,5-tetrahydrodipicolinate + H2O + H(+). Its pathway is amino-acid biosynthesis; L-lysine biosynthesis via DAP pathway; (S)-tetrahydrodipicolinate from L-aspartate: step 3/4. Catalyzes the condensation of (S)-aspartate-beta-semialdehyde [(S)-ASA] and pyruvate to 4-hydroxy-tetrahydrodipicolinate (HTPA). In Archaeoglobus fulgidus (strain ATCC 49558 / DSM 4304 / JCM 9628 / NBRC 100126 / VC-16), this protein is 4-hydroxy-tetrahydrodipicolinate synthase.